The chain runs to 226 residues: Ribonuclease 3 (226 aa).

Residues 5–127 (IFQRGDPIGH…IVAAIYLDCG (123 aa)) enclose the RNase III domain. Residue Glu-40 coordinates Mg(2+). Asp-44 is an active-site residue. Residues Asp-113 and Glu-116 each coordinate Mg(2+). Glu-116 is a catalytic residue. The DRBM domain maps to 154–224 (DPKTRLQEWL…ATLVIAQLDS (71 aa)).

The protein belongs to the ribonuclease III family. Homodimer. The cofactor is Mg(2+).

The protein localises to the cytoplasm. It carries out the reaction Endonucleolytic cleavage to 5'-phosphomonoester.. Its function is as follows. Digests double-stranded RNA. Involved in the processing of primary rRNA transcript to yield the immediate precursors to the large and small rRNAs (23S and 16S). Processes some mRNAs, and tRNAs when they are encoded in the rRNA operon. Processes pre-crRNA and tracrRNA of type II CRISPR loci if present in the organism. This chain is Ribonuclease 3, found in Xanthomonas oryzae pv. oryzae (strain KACC10331 / KXO85).